Consider the following 68-residue polypeptide: Small ribosomal subunit protein bS21 (68 aa).

This sequence belongs to the bacterial ribosomal protein bS21 family.

The polypeptide is Small ribosomal subunit protein bS21 (Paracoccus denitrificans (strain Pd 1222)).